Consider the following 911-residue polypeptide: Androgen receptor (911 aa).

The modulating stretch occupies residues 1 to 549; the sequence is MEVQLGLGRV…PIDYYFPPQK (549 aa). The interval 1-578 is interaction with ZNF318; the sequence is MEVQLGLGRV…GSCKVFFKRA (578 aa). Disordered regions lie at residues 35 to 164 and 192 to 225; these read QNPG…LSLL and QQQQ…YLGG. The segment covering 44 to 88 has biased composition (low complexity); that stretch reads AASAAPPGASLLLQQQQQQQQQQQQQQQQQQQQQQETSPRQQQQQ. A Phosphoserine; by CDK9 modification is found at serine 81. Residue serine 93 is modified to Phosphoserine. Low complexity predominate over residues 192–214; sequence QQQQQEAVSEGSSSGRAREASGA. A compositionally biased stretch (polar residues) spans 215–225; it reads PTSSKDNYLGG. At tyrosine 222 the chain carries Phosphotyrosine; by CSK. At serine 255 the chain carries Phosphoserine. The residue at position 266 (tyrosine 266) is a Phosphotyrosine; by CSK and TNK2. Phosphotyrosine; by CSK occurs at positions 306, 345, 356, and 361. Residue tyrosine 362 is modified to Phosphotyrosine; by CSK and TNK2. Lysine 385 participates in a covalent cross-link: Glycyl lysine isopeptide (Lys-Gly) (interchain with G-Cter in SUMO). Phosphotyrosine; by CSK is present on tyrosine 392. Lysine 512 participates in a covalent cross-link: Glycyl lysine isopeptide (Lys-Gly) (interchain with G-Cter in SUMO). Phosphotyrosine; by CSK is present on residues tyrosine 526 and tyrosine 543. The tract at residues 543–910 is interaction with LPXN; sequence YYFPPQKTCL…GKVKPIYFHT (368 aa). NR C4-type zinc fingers lie at residues 551-571 and 587-611; these read CLIC…CGSC and CASR…LRKC. The nuclear receptor DNA-binding region spans 551-623; it reads CLICGDEASG…AGMTLGARKL (73 aa). The interaction with HIPK3 stretch occupies residues 563 to 653; sequence YGALTCGSCK…TEETTQKLTV (91 aa). Residues 583 to 910 form an interaction with CCAR1 region; it reads QKYLCASRND…GKVKPIYFHT (328 aa). An interaction with KAT7 region spans residues 616–910; the sequence is MTLGARKLKK…GKVKPIYFHT (295 aa). Serine 642 is modified (phosphoserine; by STK4/MST1). Residues 660–891 enclose the NR LBD domain; that stretch reads ECQPIFLNVL…DFPEMMAEII (232 aa). The 17beta-hydroxy-5alpha-androstan-3-one site is built by asparagine 697 and arginine 744. Glycyl lysine isopeptide (Lys-Gly) (interchain with G-Cter in ubiquitin) cross-links involve residues lysine 837 and lysine 839. A 17beta-hydroxy-5alpha-androstan-3-one-binding site is contributed by threonine 869. Position 907 is a phosphotyrosine; by CSK (tyrosine 907).

This sequence belongs to the nuclear hormone receptor family. NR3 subfamily. Binds DNA as a homodimer. Part of a ternary complex containing AR, EFCAB6/DJBP and PARK7. Interacts with HIPK3 and NR0B2 in the presence of androgen. The ligand binding domain interacts with KAT7/HBO1 in the presence of dihydrotestosterone. Interacts with EFCAB6/DJBP, PQBP1, RANBP9, RBAK, SPDEF, SRA1, TGFB1I1 and RREB1. Interacts with ZMIZ1/ZIMP10 and ZMIZ2/ZMIP7 which both enhance its transactivation activity. Interacts with SLC30A9 and RAD54L2/ARIP4. Interacts with MACROD1 (via macro domain). Interacts via the ligand-binding domain with LXXLL and FXXLF motifs from NCOA1, NCOA2, NCOA3 and MAGEA11. Interacts (via nuclear receptor DNA binding domain and nuclear receptor ligand binding domain) with NCOA4. The AR N-terminal poly-Gln region binds Ran resulting in enhancement of AR-mediated transactivation. Ran-binding decreases as the poly-Gln length increases. Interacts with HIP1 (via coiled coil domain). Interacts (via ligand-binding domain) with TRIM68. Interacts with TNK2. Interacts with USP26. Interacts with RNF6. Interacts (regulated by RNF6 probably through polyubiquitination) with RNF14; regulates AR transcriptional activity. Interacts with PRMT2 and TRIM24. Interacts with RACK1. Interacts with RANBP10; this interaction enhances dihydrotestosterone-induced AR transcriptional activity. Interacts with PRPF6 in a hormone-independent way; this interaction enhances dihydrotestosterone-induced AR transcriptional activity. Interacts with STK4/MST1. Interacts with ZIPK/DAPK3. Interacts with LPXN. Interacts with MAK. Part of a complex containing AR, MAK and NCOA3. Interacts with CRY1. Interacts with CCAR1 and GATA2. Interacts with ZNF318. Interacts with BUD31. Interacts with ARID4A. Interacts with ARID4B. Interacts (via NR LBD domain) with ZBTB7A; the interaction is direct and androgen-dependent. Interacts with NCOR1. Interacts with NCOR2. Interacts with CRY2 in a ligand-dependent manner. Post-translationally, phosphorylated in prostate cancer cells in response to several growth factors including EGF. Phosphorylation is induced by c-Src kinase (CSK). Tyr-526 is one of the major phosphorylation sites and an increase in phosphorylation and Src kinase activity is associated with prostate cancer progression. Phosphorylation by TNK2 enhances the DNA-binding and transcriptional activity. Phosphorylation at Ser-81 by CDK9 regulates AR promoter selectivity and cell growth. In terms of processing, sumoylated on Lys-385 (major) and Lys-512. Ubiquitinated. Deubiquitinated by USP26. 'Lys-6' and 'Lys-27'-linked polyubiquitination by RNF6 modulates AR transcriptional activity and specificity. Palmitoylated by ZDHHC7 and ZDHHC21. Palmitoylation is required for plasma membrane targeting and for rapid intracellular signaling via ERK and AKT kinases and cAMP generation.

The protein localises to the nucleus. The protein resides in the cytoplasm. Its function is as follows. Steroid hormone receptors are ligand-activated transcription factors that regulate eukaryotic gene expression and affect cellular proliferation and differentiation in target tissues. Transcription factor activity is modulated by bound coactivator and corepressor proteins like ZBTB7A that recruits NCOR1 and NCOR2 to the androgen response elements/ARE on target genes, negatively regulating androgen receptor signaling and androgen-induced cell proliferation. Transcription activation is also down-regulated by NR0B2. Activated, but not phosphorylated, by HIPK3 and ZIPK/DAPK3. The polypeptide is Androgen receptor (AR) (Pan troglodytes (Chimpanzee)).